A 122-amino-acid chain; its full sequence is RxLR effector protein Avh52 (122 aa).

An N-terminal signal peptide occupies residues 1–21; the sequence is MRLTSILVLVIAATFHTTGTA. The RxLR-dEER signature appears at 50–68; sequence RLLRRVEKDKVDYEQDEQR. The interval 69–86 is TAP1-binding; that stretch reads SFGALKDAVKKLNPVTAV. Residues 87–98 are nuclear localization signal (NLS); sequence KKFFKQRAKRKK.

Belongs to the RxLR effector family. In terms of assembly, interacts with host acetyl transferase TAP1.

It is found in the secreted. Its subcellular location is the host nucleus. Its function is as follows. Effector that suppresses plant defense responses during the early stages of pathogen infection. Suppresses cell death induced by effectors and PAMPs in plant hosts. Interacts with host acetyltransferase TAP1 and causes TAP1 relocation into the nucleus where it acetylates histones H2A and H3 during early infection, thereby promoting susceptibility of host plant to P.sojae. The protein is RxLR effector protein Avh52 of Phytophthora sojae (strain P6497) (Soybean stem and root rot agent).